The sequence spans 79 residues: MAKLIVNFSALLMIILLVSNGLPKAVAQTCFKGEAQEGVCVKVDGSKLCDLLCRATNTTWFGACEVEDNETHCHCYGPC.

The signal sequence occupies residues 1–27; that stretch reads MAKLIVNFSALLMIILLVSNGLPKAVA. 4 disulfides stabilise this stretch: Cys-30–Cys-79, Cys-40–Cys-64, Cys-49–Cys-73, and Cys-53–Cys-75.

This sequence belongs to the DEFL family.

It localises to the secreted. This chain is Putative defensin-like protein 203, found in Arabidopsis thaliana (Mouse-ear cress).